A 392-amino-acid polypeptide reads, in one-letter code: GTPase Obg (392 aa).

An Obg domain is found at 1-159 (MKFVDEATIL…RDLQLELMLL (159 aa)). Residues 127–148 (NSRFKSSVNRSPRQKTMGTPGD) are disordered. Polar residues predominate over residues 129-143 (RFKSSVNRSPRQKTM). Residues 160–333 (ADVGMLGMPN…LCWDVMAFII (174 aa)) form the OBG-type G domain. Residues 166 to 173 (GMPNAGKS), 191 to 195 (FTTLV), 213 to 216 (DIPG), 283 to 286 (NKID), and 314 to 316 (SAA) contribute to the GTP site. Residues serine 173 and threonine 193 each contribute to the Mg(2+) site. Residues 363 to 386 (EQEVEVEDDEEWDEDWDEDDEEGV) are compositionally biased toward acidic residues. The segment at 363-392 (EQEVEVEDDEEWDEDWDEDDEEGVEFIYKR) is disordered.

This sequence belongs to the TRAFAC class OBG-HflX-like GTPase superfamily. OBG GTPase family. Monomer. Requires Mg(2+) as cofactor.

It is found in the cytoplasm. Functionally, an essential GTPase which binds GTP, GDP and possibly (p)ppGpp with moderate affinity, with high nucleotide exchange rates and a fairly low GTP hydrolysis rate. Plays a role in control of the cell cycle, stress response, ribosome biogenesis and in those bacteria that undergo differentiation, in morphogenesis control. This chain is GTPase Obg, found in Enterobacter sp. (strain 638).